We begin with the raw amino-acid sequence, 529 residues long: MTNLVPVGRALLSVSDKSGLLDLARALADLEVELISTGGTAAALRAAGLKVRDVAEVTGFPEMMDGRVKTLHPMVHGGLLALRDDDEHLVAMAAHGIEPIDLLVVNLYPFEAAVARGASYDDCIENIDIGGPAMIRAAAKNHRFVNVVTDTADYKALLDELRAHDGATRLSFRQKLALTAYARTAAYDTAVSTWMAGALKAEAPRRRSFAGTLAQTMRYGENPHQKAAFYTDGSARPGVATAKQWQGKELSYNNINDTDAAFELVAEFDPAEGPACVIVKHANPCGVARGATLAEAYARAFDCDRVSAFGGIIALNQPLDAATAEKITEIFTEVVIAPGADEEARAIFAAKKNLRLLTTEALPDPLAPGLAFKQVAGGFLVQDRDAGHVDALDLKVVTKRAPSDAELADLLFAWTVAKHVKSNAIVYVKDGATVGVGAGQMSRVDSTRIAARKSQDMAQALGLAQPLTQGSVVASDAFFPFADGLLAAAEAGATAIIQPGGSMRDDEVIAAADEAGLAMVFTGQRHFRH.

In terms of domain architecture, MGS-like spans 2 to 149 (TNLVPVGRAL…KNHRFVNVVT (148 aa)).

It belongs to the PurH family.

It carries out the reaction (6R)-10-formyltetrahydrofolate + 5-amino-1-(5-phospho-beta-D-ribosyl)imidazole-4-carboxamide = 5-formamido-1-(5-phospho-D-ribosyl)imidazole-4-carboxamide + (6S)-5,6,7,8-tetrahydrofolate. The catalysed reaction is IMP + H2O = 5-formamido-1-(5-phospho-D-ribosyl)imidazole-4-carboxamide. It participates in purine metabolism; IMP biosynthesis via de novo pathway; 5-formamido-1-(5-phospho-D-ribosyl)imidazole-4-carboxamide from 5-amino-1-(5-phospho-D-ribosyl)imidazole-4-carboxamide (10-formyl THF route): step 1/1. Its pathway is purine metabolism; IMP biosynthesis via de novo pathway; IMP from 5-formamido-1-(5-phospho-D-ribosyl)imidazole-4-carboxamide: step 1/1. This Cereibacter sphaeroides (strain ATCC 17029 / ATH 2.4.9) (Rhodobacter sphaeroides) protein is Bifunctional purine biosynthesis protein PurH.